The chain runs to 119 residues: Ribonuclease P protein component (119 aa).

It belongs to the RnpA family. As to quaternary structure, consists of a catalytic RNA component (M1 or rnpB) and a protein subunit.

It carries out the reaction Endonucleolytic cleavage of RNA, removing 5'-extranucleotides from tRNA precursor.. RNaseP catalyzes the removal of the 5'-leader sequence from pre-tRNA to produce the mature 5'-terminus. It can also cleave other RNA substrates such as 4.5S RNA. The protein component plays an auxiliary but essential role in vivo by binding to the 5'-leader sequence and broadening the substrate specificity of the ribozyme. The protein is Ribonuclease P protein component of Proteus mirabilis (strain HI4320).